A 62-amino-acid polypeptide reads, in one-letter code: Beta-defensin 110 (62 aa).

An N-terminal signal peptide occupies residues 1–21 (MKIHLFFFILLFWVTILPARS). 3 cysteine pairs are disulfide-bonded: cysteine 32-cysteine 60, cysteine 39-cysteine 53, and cysteine 43-cysteine 61.

It belongs to the beta-defensin family.

The protein localises to the secreted. Its function is as follows. Has antibacterial activity. The protein is Beta-defensin 110 (DEFB110) of Canis lupus familiaris (Dog).